The primary structure comprises 519 residues: T-box transcription factor TBX5 (519 aa).

The tract at residues M1–Q43 is disordered. The span at A17–Q28 shows a compositional bias: basic and acidic residues. The span at D29–Q43 shows a compositional bias: polar residues. The segment at residues L63 to G238 is a DNA-binding region (T-box). Disordered stretches follow at residues E254–P312 and E335–A376. The segment covering T262–D303 has biased composition (polar residues).

Monomer. Homodimer (via the T-box); binds DNA as homodimer.

The protein localises to the nucleus. The protein resides in the cytoplasm. Its function is as follows. DNA-binding protein that regulates the transcription of several genes and is involved in heart development and limb pattern formation. May bind to the core DNA motif of promoters. The sequence is that of T-box transcription factor TBX5 (tbx5) from Xenopus tropicalis (Western clawed frog).